The chain runs to 569 residues: Protein angel homolog 2 (569 aa).

Disordered stretches follow at residues 1-22, 63-92, and 109-155; these read MRKG…GVSP, LQHP…WSSW, and GLME…WLRN. Residues 63–72 are compositionally biased toward polar residues; sequence LQHPSSSFST. A compositionally biased stretch (low complexity) spans 139–150; sequence PPKGSRSPKGSP.

This sequence belongs to the CCR4/nocturin family.

This is Protein angel homolog 2 (angel2) from Danio rerio (Zebrafish).